A 255-amino-acid polypeptide reads, in one-letter code: Very-long-chain (3R)-3-hydroxyacyl-CoA dehydratase 2 (255 aa).

Residues 3–42 (AAAAATAAAKGNGGGGGRAGAGDASGTRKKKGPGPLATAY) lie on the Cytoplasmic side of the membrane. The segment at 11–34 (AKGNGGGGGRAGAGDASGTRKKKG) is disordered. Positions 13–22 (GNGGGGGRAG) are enriched in gly residues. Residues 43–61 (LVIYNVVMTAGWLVIAVGL) form a helical membrane-spanning segment. Residues 62 to 80 (VRAYLAKGSYHSLYYSIEK) lie on the Lumenal side of the membrane. A helical membrane pass occupies residues 81-98 (PLKFFQTGALLEILHCAI). Topologically, residues 99–108 (GIVPSSVVLT) are cytoplasmic. A helical membrane pass occupies residues 109–126 (SFQVMSRVFLIWAVTHSV). Over 127–131 (KEVQS) the chain is Lumenal. Residues 132–147 (EDSVLLFVIAWTITEI) traverse the membrane as a helical segment. At 148–170 (IRYSFYTFSLLNHLPYLIKWARY) the chain is on the cytoplasmic side. The chain crosses the membrane as a helical span at residues 171 to 188 (TLFIVLYPMGVSGELLTI). Active-site residues include Y177 and E184. The Lumenal segment spans residues 189-218 (YAALPFVRQAGLYSISLPNKYNFSFDYYAF). Residues 199 to 215 (GLYSISLPNKYNFSFDY) form a may be involved in interaction with TECR region. N210 is a glycosylation site (N-linked (GlcNAc...) asparagine). A helical transmembrane segment spans residues 219–236 (LILIMISYIPIFPQLYFH). Residues 237–255 (MIHQRRKILSHTEEHKKFE) are Cytoplasmic-facing.

Belongs to the very long-chain fatty acids dehydratase HACD family. May interact with enzymes of the ELO family (including ELOVL1); with those enzymes that mediate condensation, the first of the four steps of the reaction cycle responsible for fatty acids elongation, may be part of a larger fatty acids elongase complex. Interacts with BCAP31. Interacts (via the third lumenal loop) with TECR.

Its subcellular location is the endoplasmic reticulum membrane. The catalysed reaction is a very-long-chain (3R)-3-hydroxyacyl-CoA = a very-long-chain (2E)-enoyl-CoA + H2O. It carries out the reaction (3R)-hydroxyhexadecanoyl-CoA = (2E)-hexadecenoyl-CoA + H2O. The enzyme catalyses (3R)-hydroxyoctadecanoyl-CoA = (2E)-octadecenoyl-CoA + H2O. It catalyses the reaction (3R)-hydroxyeicosanoyl-CoA = (2E)-eicosenoyl-CoA + H2O. The catalysed reaction is (3R)-hydroxydocosanoyl-CoA = (2E)-docosenoyl-CoA + H2O. It carries out the reaction (3R)-hydroxytetracosanoyl-CoA = (2E)-tetracosenoyl-CoA + H2O. The enzyme catalyses (3R)-hydroxyhexacosanoyl-CoA = (2E)-hexacosenoyl-CoA + H2O. Its pathway is lipid metabolism; fatty acid biosynthesis. Its function is as follows. Catalyzes the third of the very long-chain fatty acids (VLCFA) elongation four-step cycle (condensation, reduction, dehydration, and reduction). This endoplasmic reticulum-elongation process is characterized by the addition of two carbons to the lipid chain through each cycle. This enzyme catalyzes the dehydration of the 3-hydroxyacyl-CoA intermediate into trans-2,3-enoyl-CoA, within each cycle of elongation. Therefore, it participates in the production of various VLCFAs involved in multiple biological processes as precursors of membrane lipids and lipid mediators. The chain is Very-long-chain (3R)-3-hydroxyacyl-CoA dehydratase 2 from Pongo abelii (Sumatran orangutan).